We begin with the raw amino-acid sequence, 37 residues long: Large ribosomal subunit protein bL36 (37 aa).

The protein belongs to the bacterial ribosomal protein bL36 family.

In Leptospira interrogans serogroup Icterohaemorrhagiae serovar Lai (strain 56601), this protein is Large ribosomal subunit protein bL36.